Consider the following 126-residue polypeptide: Glycine cleavage system H protein (126 aa).

One can recognise a Lipoyl-binding domain in the interval 22–104; sequence VATIGITEYA…YEKAWMVKIE (83 aa). The residue at position 63 (Lys63) is an N6-lipoyllysine.

The protein belongs to the GcvH family. The glycine cleavage system is composed of four proteins: P, T, L and H. Requires (R)-lipoate as cofactor.

Its function is as follows. The glycine cleavage system catalyzes the degradation of glycine. The H protein shuttles the methylamine group of glycine from the P protein to the T protein. In terms of biological role, is also involved in protein lipoylation via its role as an octanoyl/lipoyl carrier protein intermediate. This Staphylococcus epidermidis (strain ATCC 35984 / DSM 28319 / BCRC 17069 / CCUG 31568 / BM 3577 / RP62A) protein is Glycine cleavage system H protein.